The chain runs to 361 residues: Phospho-N-acetylmuramoyl-pentapeptide-transferase (361 aa).

Helical transmembrane passes span 25–45 (RAVL…PAVI), 73–93 (TMGG…WADL), 97–117 (YVWL…VDDW), 134–154 (YFWQ…TASL), 168–188 (ATFG…IVGA), 200–220 (GLAI…AYVA), 237–257 (AGEL…FLWF), 264–284 (VFMG…VAVV), 289–309 (IILF…MIQV), and 338–358 (QVVV…LSSL).

This sequence belongs to the glycosyltransferase 4 family. MraY subfamily. Requires Mg(2+) as cofactor.

It is found in the cell inner membrane. The catalysed reaction is UDP-N-acetyl-alpha-D-muramoyl-L-alanyl-gamma-D-glutamyl-meso-2,6-diaminopimeloyl-D-alanyl-D-alanine + di-trans,octa-cis-undecaprenyl phosphate = di-trans,octa-cis-undecaprenyl diphospho-N-acetyl-alpha-D-muramoyl-L-alanyl-D-glutamyl-meso-2,6-diaminopimeloyl-D-alanyl-D-alanine + UMP. Its pathway is cell wall biogenesis; peptidoglycan biosynthesis. In terms of biological role, catalyzes the initial step of the lipid cycle reactions in the biosynthesis of the cell wall peptidoglycan: transfers peptidoglycan precursor phospho-MurNAc-pentapeptide from UDP-MurNAc-pentapeptide onto the lipid carrier undecaprenyl phosphate, yielding undecaprenyl-pyrophosphoryl-MurNAc-pentapeptide, known as lipid I. The polypeptide is Phospho-N-acetylmuramoyl-pentapeptide-transferase (Thiobacillus denitrificans (strain ATCC 25259 / T1)).